Reading from the N-terminus, the 46-residue chain is Iota-conotoxin-like Fi11.8 (46 aa).

Residues proline 2 and proline 11 each carry the 4-hydroxyproline modification. 4 cysteine pairs are disulfide-bonded: cysteine 5–cysteine 19, cysteine 12–cysteine 22, cysteine 18–cysteine 27, and cysteine 21–cysteine 38. Proline 29 is modified (4-hydroxyproline). Residue tryptophan 33 is modified to 6'-bromotryptophan. Phenylalanine 44 bears the D-phenylalanine mark.

It belongs to the conotoxin I1 superfamily. As to expression, expressed by the venom duct.

The protein resides in the secreted. Its function is as follows. Iota-conotoxins bind to voltage-gated sodium channels (Nav) and act as agonists by shifting the voltage-dependence of activation to more hyperpolarized levels. Produces general excitatory symptoms. The protein is Iota-conotoxin-like Fi11.8 of Conus figulinus (Fig cone).